The primary structure comprises 423 residues: Tyrosine--tRNA ligase (423 aa).

Residue tyrosine 35 participates in L-tyrosine binding. The short motif at 40 to 49 is the 'HIGH' region element; that stretch reads PTAASLHVGH. L-tyrosine-binding residues include tyrosine 170 and glutamine 174. Positions 231 to 235 match the 'KMSKS' region motif; the sequence is KFGKS. Lysine 234 contacts ATP. One can recognise an S4 RNA-binding domain in the interval 353 to 419; it reads GPLVDLLVEV…GKKNLAAVEV (67 aa).

Belongs to the class-I aminoacyl-tRNA synthetase family. TyrS type 1 subfamily. In terms of assembly, homodimer.

The protein localises to the cytoplasm. It carries out the reaction tRNA(Tyr) + L-tyrosine + ATP = L-tyrosyl-tRNA(Tyr) + AMP + diphosphate + H(+). Its function is as follows. Catalyzes the attachment of tyrosine to tRNA(Tyr) in a two-step reaction: tyrosine is first activated by ATP to form Tyr-AMP and then transferred to the acceptor end of tRNA(Tyr). In Streptomyces griseus subsp. griseus (strain JCM 4626 / CBS 651.72 / NBRC 13350 / KCC S-0626 / ISP 5235), this protein is Tyrosine--tRNA ligase.